The following is a 215-amino-acid chain: MSKAITIAEAQRYDAHATNVIGIPAMVLMERAALATFNNLLNDDFDLDRVVVVAATGNNGGDGIAVARLLKIRGIDVTIYLLGDPENATPQTSQQLKIANYYNIPVTADLNQIVNATLIVDAIFGVGLTRDVTGKFADAINAINAADAKTVAIDVPSGINADTGAVMGVAVVADSTTTMAYNKIGLLTTVGKQHAGTIHVADIGIYAQDRVEHAR.

Residues 10 to 211 enclose the YjeF N-terminal domain; it reads AQRYDAHATN…DIGIYAQDRV (202 aa). 58 to 62 contacts (6S)-NADPHX; it reads NNGGD. K(+)-binding residues include asparagine 59 and aspartate 121. (6S)-NADPHX is bound by residues 125 to 131 and aspartate 154; that span reads GVGLTRD. Serine 157 serves as a coordination point for K(+).

This sequence belongs to the NnrE/AIBP family. K(+) is required as a cofactor.

It catalyses the reaction (6R)-NADHX = (6S)-NADHX. The enzyme catalyses (6R)-NADPHX = (6S)-NADPHX. Its function is as follows. Catalyzes the epimerization of the S- and R-forms of NAD(P)HX, a damaged form of NAD(P)H that is a result of enzymatic or heat-dependent hydration. This is a prerequisite for the S-specific NAD(P)H-hydrate dehydratase to allow the repair of both epimers of NAD(P)HX. This is NAD(P)H-hydrate epimerase from Levilactobacillus brevis (strain ATCC 367 / BCRC 12310 / CIP 105137 / JCM 1170 / LMG 11437 / NCIMB 947 / NCTC 947) (Lactobacillus brevis).